We begin with the raw amino-acid sequence, 632 residues long: Eukaryotic peptide chain release factor GTP-binding subunit ERF3B (632 aa).

Disordered regions lie at residues 1-31 (MDLG…GDGI) and 162-200 (SEAK…SIPS). The span at 178-192 (ESVKEVMEEKEEVRK) shows a compositional bias: basic and acidic residues. Residues 205–429 (KEHVNVVFIG…YLDSLPNFNR (225 aa)) form the tr-type G domain. Positions 214–221 (GHVDAGKS) are G1. Residue 217–222 (DAGKST) participates in GTP binding. The tract at residues 270-274 (GKTVE) is G2. The interval 291–294 (DAPG) is G3. GTP contacts are provided by residues 353-356 (NKMD) and 395-397 (SGL). The G4 stretch occupies residues 353–356 (NKMD). Residues 395-397 (SGL) form a G5 region.

The protein belongs to the TRAFAC class translation factor GTPase superfamily. Classic translation factor GTPase family. ERF3 subfamily. Component of the eRF1-eRF3-GTP ternary complex, composed of ETF1/ERF1 and ERF3 (GSPT1/ERF3A or GSPT2/ERF3B) and GTP. Component of the transient SURF (SMG1-UPF1-eRF1-eRF3) complex. Interacts with UPF1 and PABPC1. As to expression, highly expressed in brain. Moderately expressed in spleen and lung. Weakly expressed in heart, liver and kidney. Expression during the cell-cycle progression is constant.

It localises to the cytoplasm. It catalyses the reaction GTP + H2O = GDP + phosphate + H(+). Functionally, GTPase component of the eRF1-eRF3-GTP ternary complex, a ternary complex that mediates translation termination in response to the termination codons UAA, UAG and UGA. GSPT2/ERF3B mediates ETF1/ERF1 delivery to stop codons: The eRF1-eRF3-GTP complex binds to a stop codon in the ribosomal A-site. GTP hydrolysis by GSPT2/ERF3B induces a conformational change that leads to its dissociation, permitting ETF1/ERF1 to accommodate fully in the A-site. Component of the transient SURF complex which recruits UPF1 to stalled ribosomes in the context of nonsense-mediated decay (NMD) of mRNAs containing premature stop codons. This Mus musculus (Mouse) protein is Eukaryotic peptide chain release factor GTP-binding subunit ERF3B (Gspt2).